Here is a 121-residue protein sequence, read N- to C-terminus: Large ribosomal subunit protein bL19 (121 aa).

This sequence belongs to the bacterial ribosomal protein bL19 family.

Functionally, this protein is located at the 30S-50S ribosomal subunit interface and may play a role in the structure and function of the aminoacyl-tRNA binding site. This Neisseria gonorrhoeae (strain ATCC 700825 / FA 1090) protein is Large ribosomal subunit protein bL19.